We begin with the raw amino-acid sequence, 119 residues long: MVKLAFPRELRLLTPAHFTFVFQQPQRAGTPQITILGRLNSLGHPRIGLTVAKKNVKRAHERNRIKRLTRESFRLRQHELPPMDFVVVAKRGIADLDNRELSEALEKLWRRHCRLVRGS.

Belongs to the RnpA family. As to quaternary structure, consists of a catalytic RNA component (M1 or rnpB) and a protein subunit.

It carries out the reaction Endonucleolytic cleavage of RNA, removing 5'-extranucleotides from tRNA precursor.. In terms of biological role, RNaseP catalyzes the removal of the 5'-leader sequence from pre-tRNA to produce the mature 5'-terminus. It can also cleave other RNA substrates such as 4.5S RNA. The protein component plays an auxiliary but essential role in vivo by binding to the 5'-leader sequence and broadening the substrate specificity of the ribozyme. In Cronobacter sakazakii (strain ATCC BAA-894) (Enterobacter sakazakii), this protein is Ribonuclease P protein component.